A 353-amino-acid polypeptide reads, in one-letter code: MTLNHFYCSIEEEIRDLTIIGGGPTGIFAAFQCGMNNISCRIIESMPQLGGQLAALYPEKHIYDVAGFPEVPAAGLVDTLWKQAERHHPEIILNETVMRYHKRDNGMFEVSVSSGHTYVSRAVLIAAGLGAFTPRKLPQLENIEALEGKSIFYAVKNVADFTGKHVVIVGGGDSALDWSVGLLKSAASVTLVHRMHEFQGHGKTAHEVMEARDAGRLNVMLDTEVMGIDVENEELKAVHVQSKNGKTRTFPADRLLLLIGFKSNIGPLAEWGLEIVDNALVVDSHMKTSVDGLYAAGDIAYYTGKLKIIQTGLSDATMAVRHSLHYIKPGEKIKHTFSSVKMAKEKKKGMQNG.

T25, E44, Q52, Y57, V97, F132, D298, and S339 together coordinate FAD.

It belongs to the ferredoxin--NADP reductase type 2 family. In terms of assembly, homodimer. The cofactor is FAD.

It carries out the reaction 2 reduced [2Fe-2S]-[ferredoxin] + NADP(+) + H(+) = 2 oxidized [2Fe-2S]-[ferredoxin] + NADPH. The chain is Ferredoxin--NADP reductase from Chlorobium chlorochromatii (strain CaD3).